The primary structure comprises 100 residues: Elastin (100 aa).

A 4-hydroxyproline mark is found at Pro72 and Pro86. Residues Cys90 and Cys95 are joined by a disulfide bond.

This sequence belongs to the elastin family. The polymeric elastin chains are cross-linked together into an extensible 3D network. Forms a ternary complex with BGN and MFAP2. Interacts with MFAP2 via divalent cations (calcium &gt; magnesium &gt; manganese) in a dose-dependent and saturating manner. Interacts with FBLN5 and FBN1. Forms a ternary complex with FBN1 and FBLN2 or FBLN5. Interacts with MFAP4 in a Ca (2+)-dependent manner; this interaction promotes ELN self-assembly. Interacts with EFEMP2 with moderate affinity. Post-translationally, elastin is formed through the cross-linking of its soluble precursor tropoelastin. Cross-linking is initiated through the action of lysyl oxidase on exposed lysines to form allysine. Subsequent spontaneous condensation reactions with other allysine or unmodified lysine residues result in various bi-, tri-, and tetrafunctional cross-links. The most abundant cross-links in mature elastin fibers are lysinonorleucine, allysine aldol, desmosine, and isodesmosine. Hydroxylation on proline residues within the sequence motif, GXPG, is most likely to be 4-hydroxy as this fits the requirement for 4-hydroxylation in vertebrates.

The protein resides in the secreted. Its subcellular location is the extracellular space. It is found in the extracellular matrix. In terms of biological role, major structural protein of tissues such as aorta and nuchal ligament, which must expand rapidly and recover completely. Molecular determinant of the late arterial morphogenesis, stabilizing arterial structure by regulating proliferation and organization of vascular smooth muscle. The sequence is that of Elastin (ELN) from Ovis aries (Sheep).